We begin with the raw amino-acid sequence, 402 residues long: Serine/threonine transporter SstT (402 aa).

9 helical membrane-spanning segments follow: residues 19 to 39, 43 to 63, 86 to 106, 138 to 158, 179 to 199, 212 to 232, 287 to 307, 327 to 347, and 354 to 374; these read IGVV…AIGL, LFVG…VISA, TFAA…TLIL, AITE…GLAM, VVKW…FTSI, LLIL…NPII, IPLG…ILTL, VVAA…LLLI, and FGIS…VGVI.

Belongs to the dicarboxylate/amino acid:cation symporter (DAACS) (TC 2.A.23) family.

The protein localises to the cell membrane. It carries out the reaction L-serine(in) + Na(+)(in) = L-serine(out) + Na(+)(out). It catalyses the reaction L-threonine(in) + Na(+)(in) = L-threonine(out) + Na(+)(out). Its function is as follows. Involved in the import of serine and threonine into the cell, with the concomitant import of sodium (symport system). This is Serine/threonine transporter SstT from Streptococcus agalactiae serotype Ia (strain ATCC 27591 / A909 / CDC SS700).